A 1172-amino-acid chain; its full sequence is Lysylphosphatidylglycerol biosynthesis bifunctional protein LysX (1172 aa).

Positions 1 to 34 are disordered; the sequence is MGLHLTVPGLRRDGRGVQSNSHDTSSKTTADISR. Residues 1-663 form a phosphatidylglycerol lysyltransferase region; the sequence is MGLHLTVPGL…LLHHDGSAPD (663 aa). Over residues 17–31 the composition is skewed to polar residues; the sequence is VQSNSHDTSSKTTAD. The next 7 membrane-spanning stretches (helical) occupy residues 80–100, 122–142, 146–166, 177–197, 214–234, 272–292, and 612–632; these read VPAA…LASV, FPDT…ALTA, IAWL…AAEI, FGEN…VLGY, AVWL…VELF, AIFG…LFLS, and VIPR…LPFS. Positions 664 to 1172 are lysine--tRNA ligase; that stretch reads VSGLRQVGLT…TLPFPLAKPH (509 aa). Positions 726–804 form a DNA-binding region, OB; sequence VSVSGRIMRI…SLIVSGWRLI (79 aa). Residues Asp1084 and Glu1091 each contribute to the Mg(2+) site.

The protein in the N-terminal section; belongs to the LPG synthetase family. It in the C-terminal section; belongs to the class-II aminoacyl-tRNA synthetase family. It depends on Mg(2+) as a cofactor.

The protein resides in the cell membrane. It catalyses the reaction tRNA(Lys) + L-lysine + ATP = L-lysyl-tRNA(Lys) + AMP + diphosphate. The catalysed reaction is L-lysyl-tRNA(Lys) + a 1,2-diacyl-sn-glycero-3-phospho-(1'-sn-glycerol) = a 1,2-diacyl-sn-glycero-3-phospho-1'-(3'-O-L-lysyl)-sn-glycerol + tRNA(Lys). Its function is as follows. Catalyzes the production of L-lysyl-tRNA(Lys)transfer and the transfer of a lysyl group from L-lysyl-tRNA(Lys) to membrane-bound phosphatidylglycerol (PG), which produces lysylphosphatidylglycerol (LPG), one of the components of the bacterial membrane with a positive net charge. LPG synthesis contributes to the resistance to cationic antimicrobial peptides (CAMPs) and likely protects M.tuberculosis against the CAMPs produced by competiting microorganisms (bacteriocins). In fact, the modification of anionic phosphatidylglycerol with positively charged L-lysine results in repulsion of the peptides. The protein is Lysylphosphatidylglycerol biosynthesis bifunctional protein LysX (lysX) of Mycobacterium bovis (strain BCG / Pasteur 1173P2).